The following is a 282-amino-acid chain: Undecaprenyl-diphosphatase (282 aa).

A run of 6 helical transmembrane segments spans residues 90–110 (YWLGWYVIIGTIPICILGLVC), 121–141 (LWVVATALVAFSGVIAFAEYV), 165–185 (LALIPGVSRSGSTISAGLFLG), 194–214 (FGFLLAIPAVFASGLFSIPDA), 228–248 (QLLVATVIAFVVGLVAVSWLL), and 256–276 (LYWFVGYRIVVGVGVLILLAV).

The protein belongs to the UppP family.

It localises to the cell membrane. It catalyses the reaction di-trans,octa-cis-undecaprenyl diphosphate + H2O = di-trans,octa-cis-undecaprenyl phosphate + phosphate + H(+). Catalyzes the dephosphorylation of undecaprenyl diphosphate (UPP). Confers resistance to bacitracin. This Mycobacterium leprae (strain Br4923) protein is Undecaprenyl-diphosphatase.